Consider the following 356-residue polypeptide: Phosphoribosylformylglycinamidine cyclo-ligase (356 aa).

Belongs to the AIR synthase family.

It localises to the cytoplasm. The enzyme catalyses 2-formamido-N(1)-(5-O-phospho-beta-D-ribosyl)acetamidine + ATP = 5-amino-1-(5-phospho-beta-D-ribosyl)imidazole + ADP + phosphate + H(+). The protein operates within purine metabolism; IMP biosynthesis via de novo pathway; 5-amino-1-(5-phospho-D-ribosyl)imidazole from N(2)-formyl-N(1)-(5-phospho-D-ribosyl)glycinamide: step 2/2. The sequence is that of Phosphoribosylformylglycinamidine cyclo-ligase from Sinorhizobium fredii (strain NBRC 101917 / NGR234).